The sequence spans 160 residues: Cytochrome b6-f complex subunit 4 (160 aa).

3 helical membrane-spanning segments follow: residues 36–56, 95–115, and 131–151; these read LLYMFPVVIFGSFACVIGLAV, LLGVLLMAAVPAGLLTVPFIE, and TVFLIGTFAAIWLGIGACLPI.

Belongs to the cytochrome b family. PetD subfamily. As to quaternary structure, the 4 large subunits of the cytochrome b6-f complex are cytochrome b6, subunit IV (17 kDa polypeptide, petD), cytochrome f and the Rieske protein, while the 4 small subunits are petG, petL, petM and petN. The complex functions as a dimer.

The protein resides in the plastid. Its subcellular location is the chloroplast thylakoid membrane. In terms of biological role, component of the cytochrome b6-f complex, which mediates electron transfer between photosystem II (PSII) and photosystem I (PSI), cyclic electron flow around PSI, and state transitions. In Tupiella akineta (Green alga), this protein is Cytochrome b6-f complex subunit 4.